The following is a 228-amino-acid chain: Endo-1,4-beta-xylanase B (228 aa).

An N-terminal signal peptide occupies residues 1–19; it reads MVSFTYLLAAVSAVTGAVA. In terms of domain architecture, GH11 spans 37-227; the sequence is KRTSPTTGVN…SSGQATMTVS (191 aa). The Nucleophile role is filled by Glu-122. Glu-214 acts as the Proton donor in catalysis.

It belongs to the glycosyl hydrolase 11 (cellulase G) family.

Its subcellular location is the secreted. The enzyme catalyses Endohydrolysis of (1-&gt;4)-beta-D-xylosidic linkages in xylans.. It participates in glycan degradation; xylan degradation. Inhibited by the proteinaceous endoxylanase inhibitor I from T.aestivum (TAXI-I). Its function is as follows. Endo-1,4-beta-xylanase involved in the hydrolysis of xylan, a major structural heterogeneous polysaccharide found in plant biomass representing the second most abundant polysaccharide in the biosphere, after cellulose. Plays an important role in causing fusarium head blight (FHB) on cereal crops. Induces cell death and hydrogen peroxide accumulation in infected wheat leaves. The sequence is that of Endo-1,4-beta-xylanase B (XYLB) from Gibberella zeae (strain ATCC MYA-4620 / CBS 123657 / FGSC 9075 / NRRL 31084 / PH-1) (Wheat head blight fungus).